Consider the following 211-residue polypeptide: Large ribosomal subunit protein uL3 (211 aa).

Positions 126-147 (HGQSRGPMAHGSRYHRRPGSMG) are disordered.

This sequence belongs to the universal ribosomal protein uL3 family. Part of the 50S ribosomal subunit. Forms a cluster with proteins L14 and L19.

In terms of biological role, one of the primary rRNA binding proteins, it binds directly near the 3'-end of the 23S rRNA, where it nucleates assembly of the 50S subunit. The chain is Large ribosomal subunit protein uL3 from Geobacillus thermodenitrificans (strain NG80-2).